We begin with the raw amino-acid sequence, 614 residues long: UvrABC system protein C (614 aa).

The GIY-YIG domain occupies 14–91 (TSPGCYIHKD…IKENKPKYNI (78 aa)). One can recognise a UVR domain in the interval 196 to 231 (DKIIDDLKSKMAVAAQSMEFERAAEYRDLIQAIGTL). Residues 595–614 (LSQVAEERVDYQTEGNHNEP) are disordered. Positions 599–614 (AEERVDYQTEGNHNEP) are enriched in basic and acidic residues.

This sequence belongs to the UvrC family. In terms of assembly, interacts with UvrB in an incision complex.

The protein resides in the cytoplasm. The UvrABC repair system catalyzes the recognition and processing of DNA lesions. UvrC both incises the 5' and 3' sides of the lesion. The N-terminal half is responsible for the 3' incision and the C-terminal half is responsible for the 5' incision. The chain is UvrABC system protein C from Streptococcus pneumoniae serotype 2 (strain D39 / NCTC 7466).